The sequence spans 297 residues: Phosphoribosylaminoimidazole-succinocarboxamide synthase (297 aa).

Belongs to the SAICAR synthetase family.

The enzyme catalyses 5-amino-1-(5-phospho-D-ribosyl)imidazole-4-carboxylate + L-aspartate + ATP = (2S)-2-[5-amino-1-(5-phospho-beta-D-ribosyl)imidazole-4-carboxamido]succinate + ADP + phosphate + 2 H(+). It participates in purine metabolism; IMP biosynthesis via de novo pathway; 5-amino-1-(5-phospho-D-ribosyl)imidazole-4-carboxamide from 5-amino-1-(5-phospho-D-ribosyl)imidazole-4-carboxylate: step 1/2. This Rhodococcus erythropolis (strain PR4 / NBRC 100887) protein is Phosphoribosylaminoimidazole-succinocarboxamide synthase.